The chain runs to 99 residues: METNNHFFYVVKCKDNSWYAGYTNDLHKRVKTHNDGKGAKYTKVRRPVELIFAESFSTKREAMQAEYYFKKLTRKKKELYIEEKRNSKEAVYVKAPNEL.

Residues 4 to 79 enclose the GIY-YIG domain; sequence NNHFFYVVKC…KKLTRKKKEL (76 aa).

The protein belongs to the UPF0213 family.

This Bacillus subtilis (strain 168) protein is UPF0213 protein YazA (yazA).